Consider the following 274-residue polypeptide: Large ribosomal subunit protein uL2 (274 aa).

Disordered regions lie at residues 37-60 and 224-252; these read QHQKSGRNNNGHITTRHKGGGHKH and AMNPIDHPHGGGEGRTGEGRHAVDPWGNL. Over residues 50–60 the composition is skewed to basic residues; the sequence is TTRHKGGGHKH. Basic and acidic residues predominate over residues 229–246; the sequence is DHPHGGGEGRTGEGRHAV.

This sequence belongs to the universal ribosomal protein uL2 family. In terms of assembly, part of the 50S ribosomal subunit. Forms a bridge to the 30S subunit in the 70S ribosome.

In terms of biological role, one of the primary rRNA binding proteins. Required for association of the 30S and 50S subunits to form the 70S ribosome, for tRNA binding and peptide bond formation. It has been suggested to have peptidyltransferase activity; this is somewhat controversial. Makes several contacts with the 16S rRNA in the 70S ribosome. The sequence is that of Large ribosomal subunit protein uL2 from Paracidovorax citrulli (strain AAC00-1) (Acidovorax citrulli).